The chain runs to 346 residues: Phosphoribosylformylglycinamidine cyclo-ligase (346 aa).

Belongs to the AIR synthase family.

The protein resides in the cytoplasm. The enzyme catalyses 2-formamido-N(1)-(5-O-phospho-beta-D-ribosyl)acetamidine + ATP = 5-amino-1-(5-phospho-beta-D-ribosyl)imidazole + ADP + phosphate + H(+). It functions in the pathway purine metabolism; IMP biosynthesis via de novo pathway; 5-amino-1-(5-phospho-D-ribosyl)imidazole from N(2)-formyl-N(1)-(5-phospho-D-ribosyl)glycinamide: step 2/2. The chain is Phosphoribosylformylglycinamidine cyclo-ligase from Vibrio campbellii (strain ATCC BAA-1116).